We begin with the raw amino-acid sequence, 453 residues long: uncharacterized protein (453 aa).

The protein to B.subtilis YcdB.

This is an uncharacterized protein from Bacillus subtilis (strain 168).